A 151-amino-acid polypeptide reads, in one-letter code: Transcriptional regulator MraZ (151 aa).

SpoVT-AbrB domains are found at residues 5–52 (ANAI…PLDE) and 81–124 (AVDL…DEDA).

The protein belongs to the MraZ family. As to quaternary structure, forms oligomers.

The protein localises to the cytoplasm. Its subcellular location is the nucleoid. This Pseudomonas fluorescens (strain SBW25) protein is Transcriptional regulator MraZ.